The following is a 588-amino-acid chain: Protein kinase C iota type (588 aa).

One can recognise a PB1 domain in the interval 18–101; sequence QVRVKAYYRG…SELIIHVFPC (84 aa). A Phorbol-ester/DAG-type zinc finger spans residues 133 to 183; the sequence is GHAFQAKRFNRRAHCAICTDRIWGLGRQGYKCINCKLLVHKKCHKLVTVEC. The disordered stretch occupies residues 194-213; that stretch reads GRIDPGSTHPEHPDQVLGKK. One can recognise a Protein kinase domain in the interval 246–514; it reads FDLLRVIGRG…FADIMAHPFF (269 aa). Residues 252-260 and Lys-275 contribute to the ATP site; that span reads IGRGSYAKV. The active-site Proton acceptor is the Asp-370. Phosphothreonine is present on residues Thr-404 and Thr-556. The region spanning 515-586 is the AGC-kinase C-terminal domain; the sequence is RNVDWDLMEQ…INPLLMSAEE (72 aa).

Belongs to the protein kinase superfamily. AGC Ser/Thr protein kinase family. PKC subfamily.

The catalysed reaction is L-seryl-[protein] + ATP = O-phospho-L-seryl-[protein] + ADP + H(+). It carries out the reaction L-threonyl-[protein] + ATP = O-phospho-L-threonyl-[protein] + ADP + H(+). Its activity is regulated as follows. Exhibits an elevated basal enzymatic activity and is not regulated by diacylglycerol, phosphatidylserine, phorbol esters or calcium ions. Two specific sites, Thr-404 (activation loop of the kinase domain) and Thr-556 (turn motif), need to be phosphorylated for its full activation. In terms of biological role, calcium- and diacylglycerol-independent serine/ threonine-protein kinase that plays a general protective role against apoptotic stimuli, is involved in NF-kappa-B activation, cell survival, differentiation and polarity, and contributes to the regulation of microtubule dynamics in the early secretory pathway. Is required for the formation and maintenance of the zonula adherens during early epithelial development and plays a critical role in organ morphogenesis and in regulating the orientation of cell division. Required for polarized epithelial organization, myocardium coherence and cell connectivity in the early somite stages. Required for heart cone tilt and development of circulatory architecture during embryogenesis. The sequence is that of Protein kinase C iota type (prkci) from Danio rerio (Zebrafish).